The chain runs to 138 residues: Nucleoside diphosphate kinase (138 aa).

Positions 9, 57, 85, 91, 102, and 112 each coordinate ATP. His-115 acts as the Pros-phosphohistidine intermediate in catalysis.

It belongs to the NDK family. Homotetramer. It depends on Mg(2+) as a cofactor.

It localises to the cytoplasm. The catalysed reaction is a 2'-deoxyribonucleoside 5'-diphosphate + ATP = a 2'-deoxyribonucleoside 5'-triphosphate + ADP. It catalyses the reaction a ribonucleoside 5'-diphosphate + ATP = a ribonucleoside 5'-triphosphate + ADP. Its function is as follows. Major role in the synthesis of nucleoside triphosphates other than ATP. The ATP gamma phosphate is transferred to the NDP beta phosphate via a ping-pong mechanism, using a phosphorylated active-site intermediate. The protein is Nucleoside diphosphate kinase of Desulforapulum autotrophicum (strain ATCC 43914 / DSM 3382 / VKM B-1955 / HRM2) (Desulfobacterium autotrophicum).